A 109-amino-acid polypeptide reads, in one-letter code: uncharacterized protein (109 aa).

Residues 90–107 (IICNFWGSLLGVGIAFYQ) traverse the membrane as a helical segment.

It localises to the membrane. This is an uncharacterized protein from Saccharomyces cerevisiae (strain ATCC 204508 / S288c) (Baker's yeast).